Consider the following 175-residue polypeptide: Small ribosomal subunit protein uS5 (175 aa).

A disordered region spans residues 1 to 21 (MAKPERNKKPQQAEERDDGMR). The S5 DRBM domain maps to 20–83 (MREKMVAVNR…EEARRKMAKV (64 aa)).

The protein belongs to the universal ribosomal protein uS5 family. Part of the 30S ribosomal subunit. Contacts proteins S4 and S8.

With S4 and S12 plays an important role in translational accuracy. Functionally, located at the back of the 30S subunit body where it stabilizes the conformation of the head with respect to the body. The chain is Small ribosomal subunit protein uS5 from Dechloromonas aromatica (strain RCB).